Reading from the N-terminus, the 129-residue chain is Natriuretic peptides B (129 aa).

An N-terminal signal peptide occupies residues 1–26 (MDPQTALSRALLLLLFLHLSLLGCRS). An intrachain disulfide couples C107 to C123.

The protein belongs to the natriuretic peptide family. In terms of processing, the precursor molecule is proteolytically cleaved, possibly by FURIN or CORIN, to produce the active peptide. May undergo further proteolytic cleavage by various proteases such as DPP4, MME and possibly FAP, to give rise to a variety of shorter peptides. May be cleaved at Pro-99 by the prolyl endopeptidase FAP (seprase) activity (in vitro). May be degraded by IDE. During IDE degradation, the resulting products initially increase the activation of NPR1 and can also stimulate NPR2 to produce cGMP before the fragments are completely degraded and inactivated by IDE (in vitro).

The protein localises to the secreted. Functionally, cardiac hormone that plays a key role in mediating cardio-renal homeostasis. May also function as a paracrine antifibrotic factor in the heart. Acts by specifically binding and stimulating NPR1 to produce cGMP, which in turn activates effector proteins that drive various biological responses. Involved in regulating the extracellular fluid volume and maintaining the fluid-electrolyte balance through natriuresis, diuresis, vasorelaxation, and inhibition of renin and aldosterone secretion. Binds the clearance receptor NPR3. In Bos taurus (Bovine), this protein is Natriuretic peptides B (NPPB).